The sequence spans 103 residues: Small ribosomal subunit protein uS10 (103 aa).

It belongs to the universal ribosomal protein uS10 family. Part of the 30S ribosomal subunit.

Functionally, involved in the binding of tRNA to the ribosomes. This chain is Small ribosomal subunit protein uS10, found in Sphingopyxis alaskensis (strain DSM 13593 / LMG 18877 / RB2256) (Sphingomonas alaskensis).